Reading from the N-terminus, the 228-residue chain is Eukaryotic translation initiation factor 4E-1 (228 aa).

Basic and acidic residues predominate over residues 1-19; the sequence is MATAEMEKTTTFDEAEKVK. A disordered region spans residues 1–33; it reads MATAEMEKTTTFDEAEKVKLNANEADDEVEEGE. The segment covering 24-33 has biased composition (acidic residues); that stretch reads EADDEVEEGE. 2 EIF4G-binding regions span residues 53-56 and 63-99; these read HPLE and FDNP…NNIH. MRNA-binding positions include 71–76, Lys-103, and 121–122; these read KQAAWG and WE. A disulfide bridge links Cys-126 with Cys-164. Residues 147–156 form an EIF4G-binding region; it reads YTLLAMIGHQ. Residues 171–176 and 216–220 contribute to the mRNA site; these read RGKGEK and KRLDR.

It belongs to the eukaryotic initiation factor 4E family. As to quaternary structure, EIF4F is a multi-subunit complex, the composition of which varies with external and internal environmental conditions. It is composed of at least EIF4A, EIF4E and EIF4G. EIF4E is also known to interact with other partners. In higher plants two isoforms of EIF4F have been identified, named isoform EIF4F and isoform EIF(iso)4F. Isoform EIF4F has subunits p220 and p26, whereas isoform EIF(iso)4F has subunits p82 and p28. In terms of assembly, (Microbial infection) Interacts with potyvirus viral genome-linked protein (VPg); this interaction is possible in susceptible hosts but is impaired in resistant plants. Thus the VPg of tobacco etch virus (TEV) strain HAT interacts with susceptible alleles pvr2(+), pvr2(3) and pvr2(9) but not with the resistant allele pvr2(2), the VPg of TEV strain CAA10 interacts with susceptible alleles pvr2(+), pvr2(2), pvr2(3) and pvr2(9), the VPg of potato virus Y (PVY) strain LYE84 interacts with tomato eIF4E1 and eIF4E2 as well as with the Capsicum annuum eIF4E1 susceptible allele pvr2(+) but not with resistant alleles pvr2(1), pvr2(2), pvr2(3), pvr2(4), pvr2(5), pvr2(6), pvr2(7), pvr2(8) and pvr2(9) and the VPg of PVY strain SON41 interacts with C.annuum eIF4E1 susceptible alleles pvr2(+), pvr2(1), pvr2(2), pvr2(3) and pvr2(4) but not with resistant alleles pvr2(5), pvr2(6), pvr2(7), pvr2(8) and pvr2(9). In addition, the susceptible allele pvr1(+) interacts strongly with TEV strains HAT and NW VPg while resistance alleles (pvr1, pvr1(1), and pvr1(2)) fail to bind TEV VPg. In terms of processing, according to the redox status, the Cys-126-Cys-164 disulfide bridge may have a role in regulating protein function by affecting its ability to bind capped mRNA.

The protein localises to the nucleus. It localises to the cytoplasm. Component of the protein complex eIF4F, which is involved in the recognition of the mRNA cap, ATP-dependent unwinding of 5'-terminal secondary structure and recruitment of mRNA to the ribosome. Recognizes and binds the 7-methylguanosine-containing mRNA cap during an early step in the initiation of protein synthesis and facilitates ribosome binding by inducing the unwinding of the mRNAs secondary structures. Key component of recessive resistance to potyviruses. In terms of biological role, (Microbial infection) Susceptibility host factor required for viral infection (e.g. potato virus Y (PVY) and tobacco etch virus (TEV)) by recruiting viral RNAs to the host ribosomal complex via an interaction with viral genome-linked protein (VPg). The polypeptide is Eukaryotic translation initiation factor 4E-1 (Capsicum annuum (Capsicum pepper)).